The sequence spans 284 residues: Sulfotransferase 4A1 (284 aa).

A phosphothreonine mark is found at Thr8, Thr11, and Thr205.

This sequence belongs to the sulfotransferase 1 family. As to expression, highly expressed in the cerebral cortex and frontal lobe, slightly less in the cerebellum, occipital and temporal lobes, relatively low in the medulla and putamen, and lowest in the spinal cord. No expression detected in the pancreas. Highly expressed in fetal brain and occipital lobe, slightly less in the whole brain, frontal lobe, hippocampus, and lung, very low expression in cerebellum, medulla oblongata, temporal lobe, testis, kidney and appendix.

Its subcellular location is the cytoplasm. In terms of biological role, atypical sulfotransferase family member with very low affinity for 3'-phospho-5'-adenylyl sulfate (PAPS) and very low catalytic activity towards L-triiodothyronine, thyroxine, estrone, p-nitrophenol, 2-naphthylamine, and 2-beta-naphthol. May have a role in the metabolism of drugs and neurotransmitters in the CNS. The sequence is that of Sulfotransferase 4A1 (SULT4A1) from Homo sapiens (Human).